Consider the following 237-residue polypeptide: 2,3-bisphosphoglycerate-dependent phosphoglycerate mutase (237 aa).

Substrate is bound by residues 10–17 (RHGESKWN), 23–24 (TG), R62, 89–92 (ERHY), K100, 116–117 (RR), and 185–186 (GN). The Tele-phosphohistidine intermediate role is filled by H11. E89 (proton donor/acceptor) is an active-site residue.

The protein belongs to the phosphoglycerate mutase family. BPG-dependent PGAM subfamily. Homodimer.

It carries out the reaction (2R)-2-phosphoglycerate = (2R)-3-phosphoglycerate. Its pathway is carbohydrate degradation; glycolysis; pyruvate from D-glyceraldehyde 3-phosphate: step 3/5. In terms of biological role, catalyzes the interconversion of 2-phosphoglycerate and 3-phosphoglycerate. This Baumannia cicadellinicola subsp. Homalodisca coagulata protein is 2,3-bisphosphoglycerate-dependent phosphoglycerate mutase.